Consider the following 691-residue polypeptide: F-box/LRR-repeat protein 5 (691 aa).

Residues 1–159 (MAPFPEEVDV…IKKKVIAQHC (159 aa)) are hemerythrin-like. Residues H15, H57, E58, E61, H80, H126, and E130 each contribute to the Fe(3+) site. An F-box domain is found at 202 to 248 (STGITHLPPEVMVSIFSYLNPQELCRCSQVSTKWSQLAKTGSLWKHL). LRR repeat units follow at residues 340–364 (SSAVSSKMVRQILELCPNLEHLDLT), 365–392 (QTDISDSAFDSWSWLGCCQSLRHLDLSG), 393–418 (CEKITDVALEKISRALGILTTHESGL), 479–508 (VWMLDAEDLADIEDAVEWRHRNVESLCVME), 576–607 (TRLLREKDLIYSGSEKSDQETGRVLLFLSLSG), 608–635 (CYQITDHGLRVLTLGGGLPYLEHLNLSG), and 636–661 (CLTVTGAGLQDLVSACPSLNDEYFYY). Residues C662, C676, C686, and C687 each coordinate [2Fe-2S] cluster.

In terms of assembly, part of a SCF (SKP1-cullin-F-box) protein ligase complex. Interacts with ACO1/IRP1, IREB2/IRP2; the interaction depends on the [2Fe-2S] cluster. Interacts with DCTN1/p150-glued. It depends on [2Fe-2S] cluster as a cofactor. Post-translationally, polybiquitinated upon iron and oxygen depletion, leading to its degradation by the proteasome. Ubiquitination is regulated by the hemerythrin-like region that acts as an oxygen and iron sensor. Undergoes constitutive ubiquitin-dependent degradation at the steady state by HERC2.

It is found in the cytoplasm. The protein resides in the perinuclear region. It localises to the nucleus. Its pathway is protein modification; protein ubiquitination. Its activity is regulated as follows. An iron-sulfur cluster promotes IRP2 polyubiquitination and degradation in response to both iron and oxygen concentrations. Component of some SCF (SKP1-cullin-F-box) protein ligase complex that plays a central role in iron homeostasis by promoting the ubiquitination and subsequent degradation of IREB2/IRP2. The C-terminal domain of FBXL5 contains a redox-sensitive [2Fe-2S] cluster that, upon oxidation, promotes binding to IRP2 to effect its oxygen-dependent degradation. Under iron deficiency conditions, the N-terminal hemerythrin-like (Hr) region, which contains a diiron metal center, cannot bind iron and undergoes conformational changes that destabilize the FBXL5 protein and cause its ubiquitination and degradation. When intracellular iron levels start rising, the Hr region is stabilized. Additional increases in iron levels facilitate the assembly and incorporation of a redox active [2Fe-2S] cluster in the C-terminal domain. Only when oxygen level is high enough to maintain the cluster in its oxidized state can FBXL5 recruit IRP2 as a substrate for polyubiquination and degradation. Promotes ubiquitination and subsequent degradation of the dynactin complex component DCTN1. Within the nucleus, promotes the ubiquitination of SNAI1; preventing its interaction with DNA and promoting its degradation. Negatively regulates DNA damage response by mediating the ubiquitin-proteasome degradation of the DNA repair protein NABP2. The chain is F-box/LRR-repeat protein 5 (FBXL5) from Bos taurus (Bovine).